The sequence spans 245 residues: Probable phosphatase YcdX (245 aa).

Positions 7, 9, 15, 40, 73, 101, 131, 192, and 194 each coordinate Zn(2+).

The protein belongs to the PHP family. In terms of assembly, homotrimer. It depends on Zn(2+) as a cofactor.

This is Probable phosphatase YcdX from Escherichia coli O81 (strain ED1a).